A 341-amino-acid polypeptide reads, in one-letter code: UDP-glucose 4-epimerase (341 aa).

It belongs to the polysaccharide synthase family.

The catalysed reaction is UDP-alpha-D-glucose = UDP-alpha-D-galactose. In terms of biological role, epimerizes UDP-galactose to UDP-glucose. The chain is UDP-glucose 4-epimerase (capD) from Rickettsia conorii (strain ATCC VR-613 / Malish 7).